A 1083-amino-acid chain; its full sequence is FACT complex subunit spt16 (1083 aa).

The residue at position 437 (Ser-437) is a Phosphoserine. A coiled-coil region spans residues 466–504; that stretch reads LESKLRNEINTEEKRKEHQRELAQQLNERAKDRLARQGN. Positions 923–1083 are disordered; sequence FEQGGWTFLD…NGHKSKKSRH (161 aa). The segment covering 935–987 has biased composition (acidic residues); the sequence is SGSEGENETAESEEDEAYNPTDAESDEESDEDSEYSEASEDSEESDEDLGSDE. Positions 988-1023 are enriched in basic and acidic residues; that stretch reads ESGKDWSDLEREAAEEDRNHDYAADDKPRNGKFDSK. Residues 1024–1033 are compositionally biased toward basic residues; the sequence is KHGKSSKHSP. The span at 1058–1076 shows a compositional bias: basic and acidic residues; that stretch reads SSKDKDRKRSRDDSRDNGH.

It belongs to the peptidase M24 family. SPT16 subfamily. As to quaternary structure, component of the FACT complex, a stable heterodimer of dre4/spt16 and Ssrp. Interacts with TRL/GAGA.

Its subcellular location is the nucleus. The protein resides in the chromosome. Functionally, component of the FACT complex, a general chromatin factor that acts to reorganize nucleosomes. The FACT complex is involved in multiple processes that require DNA as a template such as mRNA elongation, DNA replication and DNA repair. During transcription elongation the FACT complex acts as a histone chaperone that both destabilizes and restores nucleosomal structure. It facilitates the passage of RNA polymerase II and transcription by promoting the dissociation of one histone H2A-H2B dimer from the nucleosome, then subsequently promotes the reestablishment of the nucleosome following the passage of RNA polymerase II. The FACT complex is required for expression of Hox genes. The protein is FACT complex subunit spt16 (dre4) of Drosophila melanogaster (Fruit fly).